The chain runs to 915 residues: DNA (cytosine-5)-methyltransferase 3 (915 aa).

Over residues Met1–Ala14 the composition is skewed to low complexity. Disordered regions lie at residues Met1–Gln107 and His152–Asp171. The segment covering Ala21 to Gln30 has biased composition (basic and acidic residues). Residues Ala42–Pro57 are compositionally biased toward basic residues. Basic and acidic residues predominate over residues Lys71–Pro80. Acidic residues predominate over residues Val81–Gln107. The region spanning Ile188–Ser313 is the BAH domain. Over residues Glu315–Ser328 the composition is skewed to polar residues. A disordered region spans residues Glu315–Ser338. Residues Ala345–Glu876 enclose the SAM-dependent MTase C5-type domain. The Chromo domain occupies Phe445 to Leu508. Residue Cys521 is part of the active site.

The protein belongs to the class I-like SAM-binding methyltransferase superfamily. C5-methyltransferase family.

Its subcellular location is the nucleus. The enzyme catalyses a 2'-deoxycytidine in DNA + S-adenosyl-L-methionine = a 5-methyl-2'-deoxycytidine in DNA + S-adenosyl-L-homocysteine + H(+). May be involved in the CpXpG methylation and in gene silencing. The protein is DNA (cytosine-5)-methyltransferase 3 (DMT105) of Zea mays (Maize).